Consider the following 417-residue polypeptide: Probable serpin E3 (417 aa).

Positions 1-24 (MPQLSASSLFICLWLVDLCHVANS) are cleaved as a signal peptide. Residues N50, N106, N140, N147, and N152 are each glycosylated (N-linked (GlcNAc...) asparagine).

Belongs to the serpin family.

It is found in the secreted. In terms of biological role, probable serine protease inhibitor. The sequence is that of Probable serpin E3 (serpine3) from Danio rerio (Zebrafish).